The sequence spans 234 residues: Demethylmenaquinone methyltransferase (234 aa).

S-adenosyl-L-methionine contacts are provided by residues threonine 58, aspartate 79, and 104–105 (NA).

This sequence belongs to the class I-like SAM-binding methyltransferase superfamily. MenG/UbiE family.

It catalyses the reaction a 2-demethylmenaquinol + S-adenosyl-L-methionine = a menaquinol + S-adenosyl-L-homocysteine + H(+). The protein operates within quinol/quinone metabolism; menaquinone biosynthesis; menaquinol from 1,4-dihydroxy-2-naphthoate: step 2/2. In terms of biological role, methyltransferase required for the conversion of demethylmenaquinol (DMKH2) to menaquinol (MKH2). In Lysinibacillus sphaericus (strain C3-41), this protein is Demethylmenaquinone methyltransferase.